A 304-amino-acid chain; its full sequence is HPr kinase/phosphorylase (304 aa).

Active-site residues include H136 and K157. G151–S158 contacts ATP. S158 is a binding site for Mg(2+). D175 acts as the Proton acceptor; for phosphorylation activity. Proton donor; for dephosphorylation activity in catalysis. Residues L198–D207 are important for the catalytic mechanism of both phosphorylation and dephosphorylation. Residue E199 participates in Mg(2+) binding. Residue R240 is part of the active site. The interval P261–R266 is important for the catalytic mechanism of dephosphorylation.

Belongs to the HPrK/P family. As to quaternary structure, homohexamer. Mg(2+) serves as cofactor.

The catalysed reaction is [HPr protein]-L-serine + ATP = [HPr protein]-O-phospho-L-serine + ADP + H(+). It catalyses the reaction [HPr protein]-O-phospho-L-serine + phosphate + H(+) = [HPr protein]-L-serine + diphosphate. In terms of biological role, catalyzes the ATP- as well as the pyrophosphate-dependent phosphorylation of a specific serine residue in HPr, a phosphocarrier protein of the phosphoenolpyruvate-dependent sugar phosphotransferase system (PTS). HprK/P also catalyzes the pyrophosphate-producing, inorganic phosphate-dependent dephosphorylation (phosphorolysis) of seryl-phosphorylated HPr (P-Ser-HPr). The two antagonistic activities of HprK/P are regulated by several intracellular metabolites, which change their concentration in response to the absence or presence of rapidly metabolisable carbon sources (glucose, fructose, etc.) in the growth medium. Therefore, by controlling the phosphorylation state of HPr, HPrK/P is a sensor enzyme that plays a major role in the regulation of carbon metabolism and sugar transport: it mediates carbon catabolite repression (CCR), and regulates PTS-catalyzed carbohydrate uptake and inducer exclusion. The sequence is that of HPr kinase/phosphorylase from Clostridium botulinum (strain Alaska E43 / Type E3).